The chain runs to 177 residues: MSEFVTVARPYAKAAFDFAVEHNSVERWQDMLAFAAEVTKNDQMAELLSGALAPETLSEAFIAICGEQLDENGQNLIKVMAENNRLKVLPDVLEQFIHLRAASEAIAEVEVISANQLSDEQLARIVSAMEKRLSRKVKLNCKIDKSVMAGIIIRAGDMVIDGSVRGRLDRLADVLQS.

The protein belongs to the ATPase delta chain family. As to quaternary structure, F-type ATPases have 2 components, F(1) - the catalytic core - and F(0) - the membrane proton channel. F(1) has five subunits: alpha(3), beta(3), gamma(1), delta(1), epsilon(1). F(0) has three main subunits: a(1), b(2) and c(10-14). The alpha and beta chains form an alternating ring which encloses part of the gamma chain. F(1) is attached to F(0) by a central stalk formed by the gamma and epsilon chains, while a peripheral stalk is formed by the delta and b chains.

Its subcellular location is the cell inner membrane. Its function is as follows. F(1)F(0) ATP synthase produces ATP from ADP in the presence of a proton or sodium gradient. F-type ATPases consist of two structural domains, F(1) containing the extramembraneous catalytic core and F(0) containing the membrane proton channel, linked together by a central stalk and a peripheral stalk. During catalysis, ATP synthesis in the catalytic domain of F(1) is coupled via a rotary mechanism of the central stalk subunits to proton translocation. In terms of biological role, this protein is part of the stalk that links CF(0) to CF(1). It either transmits conformational changes from CF(0) to CF(1) or is implicated in proton conduction. This is ATP synthase subunit delta from Klebsiella pneumoniae (strain 342).